Here is an 801-residue protein sequence, read N- to C-terminus: Conserved oligomeric Golgi complex subunit 4 (801 aa).

The segment at 397–427 (IRSPSGDGDDEENEEARQERHRLRKEAKEQK) is disordered.

It belongs to the COG4 family. As to quaternary structure, component of the conserved oligomeric Golgi complex which is composed of eight different subunits and is required for normal Golgi morphology and localization.

The protein resides in the golgi apparatus membrane. In terms of biological role, required for normal Golgi function. This chain is Conserved oligomeric Golgi complex subunit 4 (cogc-4), found in Caenorhabditis elegans.